Reading from the N-terminus, the 364-residue chain is Dual-specificity RNA methyltransferase RlmN (364 aa).

The active-site Proton acceptor is Glu-93. The 239-residue stretch at 99 to 337 folds into the Radical SAM core domain; sequence EDDRGTLCIS…ATIRKTRGDD (239 aa). A disulfide bridge connects residues Cys-106 and Cys-342. Cys-113, Cys-117, and Cys-120 together coordinate [4Fe-4S] cluster. Residues 167-168, Ser-199, 221-223, and Asn-299 each bind S-adenosyl-L-methionine; these read GE and SLH. The active-site S-methylcysteine intermediate is Cys-342.

Belongs to the radical SAM superfamily. RlmN family. [4Fe-4S] cluster is required as a cofactor.

It localises to the cytoplasm. The catalysed reaction is adenosine(2503) in 23S rRNA + 2 reduced [2Fe-2S]-[ferredoxin] + 2 S-adenosyl-L-methionine = 2-methyladenosine(2503) in 23S rRNA + 5'-deoxyadenosine + L-methionine + 2 oxidized [2Fe-2S]-[ferredoxin] + S-adenosyl-L-homocysteine. It catalyses the reaction adenosine(37) in tRNA + 2 reduced [2Fe-2S]-[ferredoxin] + 2 S-adenosyl-L-methionine = 2-methyladenosine(37) in tRNA + 5'-deoxyadenosine + L-methionine + 2 oxidized [2Fe-2S]-[ferredoxin] + S-adenosyl-L-homocysteine. In terms of biological role, specifically methylates position 2 of adenine 2503 in 23S rRNA and position 2 of adenine 37 in tRNAs. m2A2503 modification seems to play a crucial role in the proofreading step occurring at the peptidyl transferase center and thus would serve to optimize ribosomal fidelity. This chain is Dual-specificity RNA methyltransferase RlmN, found in Dichelobacter nodosus (strain VCS1703A).